The chain runs to 430 residues: MNFVEELRWRGMLQDIMPGTEELLNKEQVTAYLGIDPTADSLHIGHLCGVMILRHLQRCGHKPLALIGGATGMIGDPSGKSAERNLLNEETLRHNQACIKKQLAKFLDFESDVPNRAELVNNYDWMKEFSFLDFVREVGKHITVNYMMAKDSVKRRLNGEARDGLSFTEFTYQLLQGYDFLHLYETKGCKLQMGGSDQWGNITTGAELIRRTNGGEVFALTCPLITKADGGKFGKTESGNIWLDPRYTSPYKFYQFWLNVSDSDAERYIKIFTSIEKEEIEALVAEHQQAPHLRALQKRLAKEVTIMVHSEEDYNAAVDASNILFGNATSESLRKLDEDTLLAVFEGVPQFEISRDALAEGVKAVDLFVDNAAVFASKGEMRKLVQGGGVSLNKEKLEAFDQVITTADLLDGKYLLVQRGKKNYFLLIAK.

Y32 contacts L-tyrosine. Residues 37–46 carry the 'HIGH' region motif; sequence PTADSLHIGH. L-tyrosine contacts are provided by Y172 and Q176. Residues 232-236 carry the 'KMSKS' region motif; sequence KFGKT. K235 lines the ATP pocket. In terms of domain architecture, S4 RNA-binding spans 362–429; that stretch reads VKAVDLFVDN…GKKNYFLLIA (68 aa).

This sequence belongs to the class-I aminoacyl-tRNA synthetase family. TyrS type 1 subfamily. As to quaternary structure, homodimer.

It localises to the cytoplasm. The catalysed reaction is tRNA(Tyr) + L-tyrosine + ATP = L-tyrosyl-tRNA(Tyr) + AMP + diphosphate + H(+). In terms of biological role, catalyzes the attachment of tyrosine to tRNA(Tyr) in a two-step reaction: tyrosine is first activated by ATP to form Tyr-AMP and then transferred to the acceptor end of tRNA(Tyr). This chain is Tyrosine--tRNA ligase, found in Bacteroides thetaiotaomicron (strain ATCC 29148 / DSM 2079 / JCM 5827 / CCUG 10774 / NCTC 10582 / VPI-5482 / E50).